The following is a 512-amino-acid chain: Tabersonine 16-hydroxylase 2 (512 aa).

Residue M1 is a topological domain, lumenal. Residues E2–L22 form a helical membrane-spanning segment. Topologically, residues K23–Y512 are cytoplasmic. Residue C445 participates in heme binding.

It belongs to the cytochrome P450 family. Heme serves as cofactor. Expressed at low levels in roots, fruits, stems, flower buds and flowers, but highly expressed in young leaves. Detected in adaxial and abaxial epidermis cells.

It localises to the endoplasmic reticulum membrane. It catalyses the reaction (-)-tabersonine + reduced [NADPH--hemoprotein reductase] + O2 = 16-hydroxytabersonine + oxidized [NADPH--hemoprotein reductase] + H2O + H(+). Its function is as follows. Involved in the foliar biosynthesis of vindoline, a precursor of vinblastine and vincristine. Hydroxylates specifically tabersonine, 2,3-dihydrotabersonine and 2,3-dihydro-3-hydroxytabersonine, but has no activity with naringenin, tryptamine, secologanin, strictosidine, ajmalicine, vindoline and catharanthine. This is Tabersonine 16-hydroxylase 2 from Catharanthus roseus (Madagascar periwinkle).